Consider the following 247-residue polypeptide: ATP synthase subunit a, chloroplastic (247 aa).

A run of 5 helical transmembrane segments spans residues 38–58 (QVLITSWVVIAILLGSAIIAV), 95–115 (VPFIGTMFLFIFVSNWSGALL), 134–154 (INTTVALALLTSVAYFYAGLS), 199–219 (LVVVVLVSLVPLVVPIPVMFL), and 220–240 (GLFTSGIQALIFATLAAAYIG).

Belongs to the ATPase A chain family. F-type ATPases have 2 components, CF(1) - the catalytic core - and CF(0) - the membrane proton channel. CF(1) has five subunits: alpha(3), beta(3), gamma(1), delta(1), epsilon(1). CF(0) has four main subunits: a, b, b' and c.

Its subcellular location is the plastid. It is found in the chloroplast thylakoid membrane. Its function is as follows. Key component of the proton channel; it plays a direct role in the translocation of protons across the membrane. The protein is ATP synthase subunit a, chloroplastic of Cucumis sativus (Cucumber).